A 313-amino-acid chain; its full sequence is WD repeat-containing protein 82-A (313 aa).

WD repeat units follow at residues 19–58, 105–144, 146–184, 192–231, 236–276, and 280–313; these read ENSD…PKRT, GHSK…CQGL, HLQG…KGPF, DRTC…VMHT, NNSK…KVAV, and KHTG…TIDD.

It belongs to the WD repeat SWD2 family. In terms of assembly, component of the SET1/COMPASS complex. Component of the PNUTS-PP1 phosphatase complex.

The protein resides in the nucleus. It is found in the chromosome. Its subcellular location is the cytoplasm. Functionally, regulatory component of the SET1/COMPASS complex implicated in the tethering of this complex to transcriptional start sites of active genes. Facilitates histone H3 'Lys-4' methylation (H3K4me) via recruitment of the SETD1A or SETD1B to the 'Ser-5' phosphorylated C-terminal domain (CTD) of RNA polymerase II large subunit (POLR2A). Component of the PNUTS-PP1 protein phosphatase complex, a protein phosphatase 1 (PP1) complex that promotes RNA polymerase II transcription pause-release, allowing transcription elongation. This Xenopus laevis (African clawed frog) protein is WD repeat-containing protein 82-A (wdr82-a).